Here is a 125-residue protein sequence, read N- to C-terminus: Small ribosomal subunit protein uS12 (125 aa).

Residues 1–31 form a disordered region; sequence MPTINQLVRQGREVETTKSKSPAMQNSPQRR. Positions 19-29 are enriched in polar residues; it reads SKSPAMQNSPQ. Position 89 is a 3-methylthioaspartic acid (Asp-89).

The protein belongs to the universal ribosomal protein uS12 family. As to quaternary structure, part of the 30S ribosomal subunit. Contacts proteins S8 and S17. May interact with IF1 in the 30S initiation complex.

Its function is as follows. With S4 and S5 plays an important role in translational accuracy. Interacts with and stabilizes bases of the 16S rRNA that are involved in tRNA selection in the A site and with the mRNA backbone. Located at the interface of the 30S and 50S subunits, it traverses the body of the 30S subunit contacting proteins on the other side and probably holding the rRNA structure together. The combined cluster of proteins S8, S12 and S17 appears to hold together the shoulder and platform of the 30S subunit. The sequence is that of Small ribosomal subunit protein uS12 from Paracidovorax citrulli (strain AAC00-1) (Acidovorax citrulli).